A 511-amino-acid polypeptide reads, in one-letter code: Probable cytochrome P450 4d21 (511 aa).

Cys456 lines the heme pocket.

It belongs to the cytochrome P450 family. The cofactor is heme.

Its subcellular location is the endoplasmic reticulum membrane. It localises to the microsome membrane. Its function is as follows. May be involved in the metabolism of insect hormones and in the breakdown of synthetic insecticides. This Drosophila melanogaster (Fruit fly) protein is Probable cytochrome P450 4d21 (Cyp4d21).